The chain runs to 442 residues: Trigger factor (442 aa).

In terms of domain architecture, PPIase FKBP-type spans 175-258 (GDFISISLHV…VNAVIEVSIP (84 aa)).

Belongs to the FKBP-type PPIase family. Tig subfamily.

Its subcellular location is the cytoplasm. It catalyses the reaction [protein]-peptidylproline (omega=180) = [protein]-peptidylproline (omega=0). In terms of biological role, involved in protein export. Acts as a chaperone by maintaining the newly synthesized protein in an open conformation. Functions as a peptidyl-prolyl cis-trans isomerase. The polypeptide is Trigger factor (tig) (Chlamydia pneumoniae (Chlamydophila pneumoniae)).